We begin with the raw amino-acid sequence, 76 residues long: Small ribosomal subunit protein bS16c (76 aa).

It belongs to the bacterial ribosomal protein bS16 family.

Its subcellular location is the plastid. It localises to the chloroplast. The chain is Small ribosomal subunit protein bS16c from Guillardia theta (Cryptophyte).